The primary structure comprises 540 residues: Chaperonin GroEL (540 aa).

ATP contacts are provided by residues 29–32 (TLGP), 86–90 (DGTTT), Gly-413, 476–478 (NAA), and Asp-492.

The protein belongs to the chaperonin (HSP60) family. In terms of assembly, forms a cylinder of 14 subunits composed of two heptameric rings stacked back-to-back. Interacts with the co-chaperonin GroES.

It localises to the cytoplasm. It carries out the reaction ATP + H2O + a folded polypeptide = ADP + phosphate + an unfolded polypeptide.. In terms of biological role, together with its co-chaperonin GroES, plays an essential role in assisting protein folding. The GroEL-GroES system forms a nano-cage that allows encapsulation of the non-native substrate proteins and provides a physical environment optimized to promote and accelerate protein folding. The chain is Chaperonin GroEL from Streptococcus agalactiae.